A 225-amino-acid chain; its full sequence is tRNA (guanine-N(1)-)-methyltransferase (225 aa).

S-adenosyl-L-methionine contacts are provided by residues G112 and 132–137 (IGDYVL).

Belongs to the RNA methyltransferase TrmD family. As to quaternary structure, homodimer.

The protein resides in the cytoplasm. It catalyses the reaction guanosine(37) in tRNA + S-adenosyl-L-methionine = N(1)-methylguanosine(37) in tRNA + S-adenosyl-L-homocysteine + H(+). Functionally, specifically methylates guanosine-37 in various tRNAs. In Flavobacterium psychrophilum (strain ATCC 49511 / DSM 21280 / CIP 103535 / JIP02/86), this protein is tRNA (guanine-N(1)-)-methyltransferase.